The sequence spans 732 residues: Guanylate cyclase soluble subunit alpha-2 (732 aa).

The interval 1-58 (MSRRKISSESFSSLGSDYLETSPEEEGECPLSRLCWNGSRSPPGPLEPSPAAAAAAAA) is disordered. Positions 49–58 (SPAAAAAAAA) are enriched in low complexity. Residues 521 to 648 (TMLFSDIVGF…NNVTLASKFE (128 aa)) form the Guanylate cyclase domain.

This sequence belongs to the adenylyl cyclase class-4/guanylyl cyclase family. As to quaternary structure, heterodimer of an alpha and a beta chain. In terms of tissue distribution, isoform 1 is expressed in fetal brain, liver, colon, endothelium and testis. Isoform 2 is expressed only in liver, colon and endothelium.

Its subcellular location is the cytoplasm. It carries out the reaction GTP = 3',5'-cyclic GMP + diphosphate. With respect to regulation, activated by nitric oxide in the presence of magnesium or manganese ions. Has guanylyl cyclase on binding to the beta-1 subunit. Functionally, isoform 2 acts as a negative regulator of guanylyl cyclase activity as it forms non-functional heterodimers with the beta subunits. This chain is Guanylate cyclase soluble subunit alpha-2 (GUCY1A2), found in Homo sapiens (Human).